The primary structure comprises 805 residues: Translation initiation factor IF-2 (805 aa).

2 disordered regions span residues 68-89 (VVTEQAQAPAEVEEKKEEEKKE) and 141-215 (KEKE…KEKK). Basic and acidic residues predominate over residues 79–89 (VEEKKEEEKKE). The tr-type G domain occupies 306–474 (PRPPIVVVMG…MILLLADILE (169 aa)). Residues 315–322 (GHVDHGKT) are G1. Residue 315 to 322 (GHVDHGKT) coordinates GTP. A G2 region spans residues 340 to 344 (GITQH). The G3 stretch occupies residues 362–365 (DTPG). GTP is bound by residues 362 to 366 (DTPGH) and 416 to 419 (NKID). Residues 416-419 (NKID) form a G4 region. A G5 region spans residues 452–454 (SAK).

It belongs to the TRAFAC class translation factor GTPase superfamily. Classic translation factor GTPase family. IF-2 subfamily.

It localises to the cytoplasm. Its function is as follows. One of the essential components for the initiation of protein synthesis. Protects formylmethionyl-tRNA from spontaneous hydrolysis and promotes its binding to the 30S ribosomal subunits. Also involved in the hydrolysis of GTP during the formation of the 70S ribosomal complex. The polypeptide is Translation initiation factor IF-2 (infB) (Aquifex aeolicus (strain VF5)).